The following is a 759-amino-acid chain: LON peptidase N-terminal domain and RING finger protein 3 (759 aa).

A disordered region spans residues 1–69; the sequence is MESVRIEQML…PGTSTPESKV (69 aa). Residues 57-66 are compositionally biased toward polar residues; that stretch reads EQSPGTSTPE. The stretch at 67-100 is one TPR 1 repeat; it reads SKVLLTQADALASRGRIREALEVYRQLSERQQLV. An RING-type 1 zinc finger spans residues 158-196; that stretch reads CRKCHGFLSDPVSLSCGHTFCKLCLERGRAADRRCALCG. TPR repeat units lie at residues 243-276, 278-310, and 312-344; these read ASQL…APND, LLYS…RPMG, and KAHF…DGKN. Residues 360–454 are disordered; the sequence is HCSSQEEAAA…TDQGDKPALS (95 aa). Over residues 380 to 393 the composition is skewed to basic and acidic residues; that stretch reads AKVKGDGQQHHMKD. An RING-type 2 zinc finger spans residues 467 to 505; it reads CALCMRLFYEPVTTPCGHTFCLKCLERCLDHNAKCPLCK. The region spanning 546–755 is the Lon N-terminal domain; the sequence is MEELSNLNKN…GIRRVLAFIS (210 aa).

The polypeptide is LON peptidase N-terminal domain and RING finger protein 3 (LONRF3) (Homo sapiens (Human)).